A 339-amino-acid chain; its full sequence is Uroporphyrinogen decarboxylase (339 aa).

Substrate is bound by residues 21–25 (RQAGR), F40, D71, Y147, S202, and H315.

It belongs to the uroporphyrinogen decarboxylase family. Homodimer.

It localises to the cytoplasm. It carries out the reaction uroporphyrinogen III + 4 H(+) = coproporphyrinogen III + 4 CO2. It functions in the pathway porphyrin-containing compound metabolism; protoporphyrin-IX biosynthesis; coproporphyrinogen-III from 5-aminolevulinate: step 4/4. Catalyzes the decarboxylation of four acetate groups of uroporphyrinogen-III to yield coproporphyrinogen-III. The polypeptide is Uroporphyrinogen decarboxylase (Helicobacter pylori (strain J99 / ATCC 700824) (Campylobacter pylori J99)).